Reading from the N-terminus, the 107-residue chain is Serine-rich and transmembrane domain-containing protein 1 (107 aa).

A helical membrane pass occupies residues 43–63 (IYVSIFLSLLAFLLLLLIIAL).

The protein resides in the membrane. The chain is Serine-rich and transmembrane domain-containing protein 1 (SERTM1) from Homo sapiens (Human).